The sequence spans 556 residues: Secreted lipase 4 (556 aa).

Residues 1–21 (MKLLTNIGTLLALSPVQQVSA) form the signal peptide. Asn46, Asn263, Asn305, Asn411, and Asn453 each carry an N-linked (GlcNAc...) asparagine glycan.

This sequence belongs to the type-B carboxylesterase/lipase family.

Its subcellular location is the secreted. The catalysed reaction is a carboxylic ester + H2O = an alcohol + a carboxylate + H(+). Functionally, secreted lipase involved in plant virulence. Has a substrate preference for p-nitrophenyl esters with a carbon chain length of C12 (p-nitrophenyl laureate). In Gibberella zeae (strain ATCC MYA-4620 / CBS 123657 / FGSC 9075 / NRRL 31084 / PH-1) (Wheat head blight fungus), this protein is Secreted lipase 4.